We begin with the raw amino-acid sequence, 896 residues long: Bifunctional glutamine synthetase adenylyltransferase/adenylyl-removing enzyme (896 aa).

Residues 1–411 (MSDNRLDTAR…LFNEILSEPE (411 aa)) form an adenylyl removase region. The tract at residues 417-896 (NSEWQWAWQE…EVFGEEAATA (480 aa)) is adenylyl transferase.

Belongs to the GlnE family. It depends on Mg(2+) as a cofactor.

It catalyses the reaction [glutamine synthetase]-O(4)-(5'-adenylyl)-L-tyrosine + phosphate = [glutamine synthetase]-L-tyrosine + ADP. The enzyme catalyses [glutamine synthetase]-L-tyrosine + ATP = [glutamine synthetase]-O(4)-(5'-adenylyl)-L-tyrosine + diphosphate. In terms of biological role, involved in the regulation of glutamine synthetase GlnA, a key enzyme in the process to assimilate ammonia. When cellular nitrogen levels are high, the C-terminal adenylyl transferase (AT) inactivates GlnA by covalent transfer of an adenylyl group from ATP to specific tyrosine residue of GlnA, thus reducing its activity. Conversely, when nitrogen levels are low, the N-terminal adenylyl removase (AR) activates GlnA by removing the adenylyl group by phosphorolysis, increasing its activity. The regulatory region of GlnE binds the signal transduction protein PII (GlnB) which indicates the nitrogen status of the cell. This Neisseria meningitidis serogroup A / serotype 4A (strain DSM 15465 / Z2491) protein is Bifunctional glutamine synthetase adenylyltransferase/adenylyl-removing enzyme.